Reading from the N-terminus, the 401-residue chain is S-adenosylmethionine synthase (401 aa).

H16 lines the ATP pocket. D18 is a Mg(2+) binding site. E44 contributes to the K(+) binding site. Residues E57 and Q100 each contribute to the L-methionine site. The segment at Q100–E110 is flexible loop. Residues D174–K176, R241–F242, D250, R256–K257, A273, and K277 each bind ATP. D250 is an L-methionine binding site. Residue K281 participates in L-methionine binding.

The protein belongs to the AdoMet synthase family. In terms of assembly, homotetramer; dimer of dimers. Mg(2+) serves as cofactor. It depends on K(+) as a cofactor.

It localises to the cytoplasm. The catalysed reaction is L-methionine + ATP + H2O = S-adenosyl-L-methionine + phosphate + diphosphate. It participates in amino-acid biosynthesis; S-adenosyl-L-methionine biosynthesis; S-adenosyl-L-methionine from L-methionine: step 1/1. Its function is as follows. Catalyzes the formation of S-adenosylmethionine (AdoMet) from methionine and ATP. The overall synthetic reaction is composed of two sequential steps, AdoMet formation and the subsequent tripolyphosphate hydrolysis which occurs prior to release of AdoMet from the enzyme. In Streptococcus equi subsp. zooepidemicus (strain MGCS10565), this protein is S-adenosylmethionine synthase.